Reading from the N-terminus, the 271-residue chain is Phosphatidylinositol transfer protein alpha isoform (271 aa).

A 1,2-diacyl-sn-glycero-3-phospho-(1D-myo-inositol) contacts are provided by threonine 59, lysine 61, glutamate 86, asparagine 90, threonine 97, and lysine 195. Residue lysine 216 is modified to N6-acetyllysine. Residues 251 to 264 (TKRQLDEMRQKDPV) show a composition bias toward basic and acidic residues. Residues 251-271 (TKRQLDEMRQKDPVKGMTADD) form a disordered region.

Belongs to the PtdIns transfer protein family. PI transfer class I subfamily. In terms of processing, phosphorylated by PKC in a calcium and phosphatidylserine-dependent manner.

It localises to the cytoplasm. It is found in the nucleus. The enzyme catalyses a 1,2-diacyl-sn-glycero-3-phosphocholine(in) = a 1,2-diacyl-sn-glycero-3-phosphocholine(out). It catalyses the reaction a 1,2-diacyl-sn-glycero-3-phospho-(1D-myo-inositol)(in) = a 1,2-diacyl-sn-glycero-3-phospho-(1D-myo-inositol)(out). Its function is as follows. Catalyzes the transfer of phosphatidylinositol (PI) and phosphatidylcholine (PC) between membranes. Shows a preference for PI and PC containing shorter saturated or monosaturated acyl chains at the sn-1 and sn-2 positions. Preference order for PC is C16:1 &gt; C16:0 &gt; C18:1 &gt; C18:0 &gt; C20:4 and for PI is C16:1 &gt; C16:0 &gt; C18:1 &gt; C18:0 &gt; C20:4 &gt; C20:3. This chain is Phosphatidylinositol transfer protein alpha isoform (Pitpna), found in Mus musculus (Mouse).